The sequence spans 201 residues: LexA repressor (201 aa).

A DNA-binding region (H-T-H motif) is located at residues 29–49 (VREICKAVGLSSTSSVHFHLK). Catalysis depends on for autocatalytic cleavage activity residues Ser-125 and Lys-162.

The protein belongs to the peptidase S24 family. Homodimer.

The catalysed reaction is Hydrolysis of Ala-|-Gly bond in repressor LexA.. Represses a number of genes involved in the response to DNA damage (SOS response), including recA and lexA. In the presence of single-stranded DNA, RecA interacts with LexA causing an autocatalytic cleavage which disrupts the DNA-binding part of LexA, leading to derepression of the SOS regulon and eventually DNA repair. This is LexA repressor from Clostridium botulinum (strain 657 / Type Ba4).